Consider the following 312-residue polypeptide: Protoheme IX farnesyltransferase (312 aa).

8 consecutive transmembrane segments (helical) span residues 34–54, 56–76, 119–139, 152–172, 179–199, 225–245, 247–267, and 283–303; these read LVIF…HPVL, FTAI…NMAL, ALVN…YVVI, IVIG…AATG, LLLF…LALF, ILLY…LGYF, WVYG…AINV, and LFAF…LDVL.

It belongs to the UbiA prenyltransferase family. Protoheme IX farnesyltransferase subfamily.

It localises to the cell inner membrane. It carries out the reaction heme b + (2E,6E)-farnesyl diphosphate + H2O = Fe(II)-heme o + diphosphate. Its pathway is porphyrin-containing compound metabolism; heme O biosynthesis; heme O from protoheme: step 1/1. Functionally, converts heme B (protoheme IX) to heme O by substitution of the vinyl group on carbon 2 of heme B porphyrin ring with a hydroxyethyl farnesyl side group. The chain is Protoheme IX farnesyltransferase from Nitrobacter hamburgensis (strain DSM 10229 / NCIMB 13809 / X14).